The primary structure comprises 316 residues: Cytochrome c biogenesis protein CcsA (316 aa).

8 helical membrane passes run 12–32 (HISLSIILIVITIFLMNLLVY), 44–64 (GMVASFLCITGLLVIRWIYSG), 71–91 (LYESLMFLSWSFSIFYMIPYF), 98–118 (LNVLTAPGTIFTQGFATSGVL), 145–165 (LSYAALLCGSLLSVALLVILF), 222–242 (VISLGFLFLTIGILSGAVWAN), 256–270 (TWAFITWTIFAIYLH), and 283–303 (AIVASIGFFIIWICYFGVNLL).

The protein belongs to the CcmF/CycK/Ccl1/NrfE/CcsA family. As to quaternary structure, may interact with Ccs1.

Its subcellular location is the plastid. The protein localises to the chloroplast thylakoid membrane. Functionally, required during biogenesis of c-type cytochromes (cytochrome c6 and cytochrome f) at the step of heme attachment. This chain is Cytochrome c biogenesis protein CcsA, found in Ranunculus macranthus (Large buttercup).